A 271-amino-acid chain; its full sequence is Putative phosphoenolpyruvate synthase regulatory protein (271 aa).

151–158 (GVSRSGKT) contacts ADP.

Belongs to the pyruvate, phosphate/water dikinase regulatory protein family. PSRP subfamily.

It carries out the reaction [pyruvate, water dikinase] + ADP = [pyruvate, water dikinase]-phosphate + AMP + H(+). It catalyses the reaction [pyruvate, water dikinase]-phosphate + phosphate + H(+) = [pyruvate, water dikinase] + diphosphate. Functionally, bifunctional serine/threonine kinase and phosphorylase involved in the regulation of the phosphoenolpyruvate synthase (PEPS) by catalyzing its phosphorylation/dephosphorylation. This is Putative phosphoenolpyruvate synthase regulatory protein from Burkholderia ambifaria (strain MC40-6).